A 65-amino-acid polypeptide reads, in one-letter code: Large ribosomal subunit protein uL30 (65 aa).

This sequence belongs to the universal ribosomal protein uL30 family. As to quaternary structure, part of the 50S ribosomal subunit.

The sequence is that of Large ribosomal subunit protein uL30 from Mycobacterium bovis (strain ATCC BAA-935 / AF2122/97).